The chain runs to 154 residues: Myoglobin (154 aa).

A Globin domain is found at 2–148 (GLSDGEWQLV…FRNDMAAKYK (147 aa)). Ser-4 is modified (phosphoserine). His-65 contributes to the nitrite binding site. Position 65 (His-65) interacts with O2. At Thr-68 the chain carries Phosphothreonine. His-94 is a binding site for heme b.

The protein belongs to the globin family. Monomeric.

The protein resides in the cytoplasm. Its subcellular location is the sarcoplasm. The enzyme catalyses Fe(III)-heme b-[protein] + nitric oxide + H2O = Fe(II)-heme b-[protein] + nitrite + 2 H(+). It catalyses the reaction H2O2 + AH2 = A + 2 H2O. Monomeric heme protein which primary function is to store oxygen and facilitate its diffusion within muscle tissues. Reversibly binds oxygen through a pentacoordinated heme iron and enables its timely and efficient release as needed during periods of heightened demand. Depending on the oxidative conditions of tissues and cells, and in addition to its ability to bind oxygen, it also has a nitrite reductase activity whereby it regulates the production of bioactive nitric oxide. Under stress conditions, like hypoxia and anoxia, it also protects cells against reactive oxygen species thanks to its pseudoperoxidase activity. The sequence is that of Myoglobin (MB) from Macaca fascicularis (Crab-eating macaque).